The primary structure comprises 414 residues: MFPCSRIWSLLVAAATASAVPTSLATTHLQSVDLLLTRSSYGFLTDIALGTPGQSLPYLVDWTWTGHYVVTTLCYNDPTATYDCLNVDQKIFNQTLSSTFINQTDQYGYLYWDPNHFYFTEPAAADVATDMLRIGPTAVNTTIQAANFVFNETISAFPFSGVYGLSPVFQGDNRSVQASFYQGWRSGAWHSPIVSFIYCHDNATKAVCSGYDGLQTLGGYNTSHVQGDITWYDIIVTEAINTLDFVYAPAVINYWALNLTRFSIGDEEQELNKTTTLDGKQAAVAAFDHASYGRGAPVSVYGYQRLVELVGAKAVTLSDPPNNGEQGFYQFDCRNSSLLPPLRYEFAGSERAWEIVPENYVEVLANGTNKCTFNVRTLGDGAMVMGNFGETFAIDKYVMFDFEKLQVGIADFAW.

Residues 1–19 (MFPCSRIWSLLVAAATASA) form the signal peptide. The Peptidase A1 domain maps to 43–410 (FLTDIALGTP…DFEKLQVGIA (368 aa)). N-linked (GlcNAc...) asparagine glycosylation is found at Asn93, Asn102, Asn140, Asn151, Asn173, Asn202, Asn221, Asn258, Asn272, Asn335, and Asn366. A disulfide bond links Cys333 and Cys371.

The protein belongs to the peptidase A1 family.

It participates in secondary metabolite biosynthesis. Its function is as follows. Aspartic protease-like protein; part of the gene cluster that mediates the biosynthesis of pyranonigrins, a family of antioxidative compounds. The first step of pyranonigrins biosynthesis is performed by the hybrid PKS-NRPS synthetase that condenses 6 malonyl-CoA units to an acetyl starter unit, to form a 1,3,5-trioxotetradecane-6,8-dienyl-ACP. The enoyl reductase (ER) domain of pynA is likely to be functional during the first two rounds of polyketide chain extension, to generate the saturated C-C bonds of the alkyl side chain. PynA subsequently forms the amide bond between the acyl chain and L-serine. Although pynA has a terminal reductase domain, it appears to require the thioesterase pynI for the release of the straight-chain intermediate from pynA via the formation of a tetramic acid pyranonigrin J. The methyltransferase pynC then coverts pyranonigrin J to pyranonigrin I via N-methylation. The FAD-dependent monooxygenase pynG catalyzes an epoxidation-mediated cyclization to form the dihydro-gamma-pyrone moiety, followed by pynD-catalyzed oxidation of the alcohol to the ketone and enolization to yield the characteristic tetramic acid-fused gamma-pyrone core of pyranonigrin H. Pyranonigrin H is substrate of pynH for dehydration-mediated exo-methylene formation from the serine side chain to produce pyranonigrin E, before the oxidase pynE reduces the exo-methylene of pyranonigrin E into a pendant methyl to form pyranonigrin G. The FAD-linked oxidoreductase pynB performs the reverse reaction and converts pyranonigrin G back to pyranonigrin E. In Aspergillus niger (strain ATCC MYA-4892 / CBS 513.88 / FGSC A1513), this protein is Aspartic protease-like protein pynH.